Here is a 169-residue protein sequence, read N- to C-terminus: Cell division protein B3 (169 aa).

Functionally, part of a cell division machinery. May fulfill a coordination function between the Cdv proteins during cell division. The chain is Cell division protein B3 from Sulfolobus acidocaldarius (strain ATCC 33909 / DSM 639 / JCM 8929 / NBRC 15157 / NCIMB 11770).